We begin with the raw amino-acid sequence, 343 residues long: Vancomycin/teicoplanin A-type resistance protein VanA (343 aa).

ATP-binding positions include lysine 133, 169-171 (FVK), 177-178 (SS), 207-214 (EQAVSGCE), and phenylalanine 241. The region spanning 137-338 (YIVAKNAGIA…LPELIDRLIV (202 aa)) is the ATP-grasp domain. Histidine 244 lines the substrate pocket. 304–305 (NE) contacts ATP. The Mg(2+) site is built by glutamate 305 and asparagine 307.

It belongs to the D-alanine--D-alanine ligase family. The cofactor is Mg(2+). Mn(2+) is required as a cofactor.

It localises to the cell membrane. The enzyme catalyses (R)-lactate + D-alanine + ATP = D-alanyl-(R)-lactate + ADP + phosphate. In terms of biological role, required for high-level resistance to glycopeptide antibiotics. D-Ala--D-Ala ligase of altered specificity which catalyzes ester bond formation between D-Ala and various D-hydroxy acids; produces a peptidoglycan which does not terminate in D-alanine but in D-lactate, thus preventing vancomycin or teicoplanin binding. This is Vancomycin/teicoplanin A-type resistance protein VanA (vanA) from Enterococcus faecium (Streptococcus faecium).